A 543-amino-acid chain; its full sequence is uncharacterized protein (543 aa).

One can recognise a PE domain in the interval 1–93; the sequence is MSFVTAAPEM…GGAYSSAEAA (93 aa). Residues 194 to 214 are disordered; it reads GGAGGPGGPTDVPAGTGGAGG.

Belongs to the mycobacterial PE family. PGRS subfamily.

This is an uncharacterized protein from Mycobacterium tuberculosis (strain CDC 1551 / Oshkosh).